Consider the following 467-residue polypeptide: Asparagine--tRNA ligase (467 aa).

This sequence belongs to the class-II aminoacyl-tRNA synthetase family. As to quaternary structure, homodimer.

It localises to the cytoplasm. The enzyme catalyses tRNA(Asn) + L-asparagine + ATP = L-asparaginyl-tRNA(Asn) + AMP + diphosphate + H(+). The polypeptide is Asparagine--tRNA ligase (Haemophilus influenzae (strain PittEE)).